The sequence spans 340 residues: UDP-glucose 4-epimerase (340 aa).

Residues 12-13, 32-37, 59-60, 81-85, Asn-100, Ser-125, Tyr-150, Lys-154, and Phe-179 each bind NAD(+); these read FI, DNYGNS, DV, and FAGLK. 2 residues coordinate substrate: Ser-125 and Tyr-150. Residue Tyr-150 is the Proton acceptor of the active site. Substrate-binding positions include Asn-180, 200–201, 217–219, Arg-232, and 292–295; these read NL, QVY, and RPGD.

Belongs to the NAD(P)-dependent epimerase/dehydratase family. Homodimer. NAD(+) serves as cofactor.

It carries out the reaction UDP-alpha-D-glucose = UDP-alpha-D-galactose. It participates in carbohydrate metabolism; galactose metabolism. Involved in the metabolism of galactose. Catalyzes the conversion of UDP-galactose (UDP-Gal) to UDP-glucose (UDP-Glc) through a mechanism involving the transient reduction of NAD. Can also epimerize UDP-GalNAc to UDP-GlcNAc. Involved in the lacto-N-biose I/galacto-N-biose (LNB/GNB) degradation pathway, which is important for host intestinal colonization by bifidobacteria. In Bifidobacterium longum subsp. longum (strain ATCC 15707 / DSM 20219 / JCM 1217 / NCTC 11818 / E194b), this protein is UDP-glucose 4-epimerase (lnpD).